Consider the following 203-residue polypeptide: Small ribosomal subunit protein uS4 (203 aa).

Positions 93 to 156 (RRLDNVVYRL…MKVPAILEAV (64 aa)) constitute an S4 RNA-binding domain.

This sequence belongs to the universal ribosomal protein uS4 family. As to quaternary structure, part of the 30S ribosomal subunit. Contacts protein S5. The interaction surface between S4 and S5 is involved in control of translational fidelity.

Functionally, one of the primary rRNA binding proteins, it binds directly to 16S rRNA where it nucleates assembly of the body of the 30S subunit. With S5 and S12 plays an important role in translational accuracy. The protein is Small ribosomal subunit protein uS4 of Streptococcus pyogenes serotype M49 (strain NZ131).